Reading from the N-terminus, the 314-residue chain is Ferrochelatase (314 aa).

Fe cation-binding residues include H184 and E259.

The protein belongs to the ferrochelatase family.

The protein resides in the cytoplasm. It carries out the reaction heme b + 2 H(+) = protoporphyrin IX + Fe(2+). The protein operates within porphyrin-containing compound metabolism; protoheme biosynthesis; protoheme from protoporphyrin-IX: step 1/1. Catalyzes the ferrous insertion into protoporphyrin IX. This chain is Ferrochelatase, found in Chlamydia trachomatis serovar D (strain ATCC VR-885 / DSM 19411 / UW-3/Cx).